A 392-amino-acid chain; its full sequence is Ceramide synthase 5 (392 aa).

Residues 1–46 (MATAAQGPLSLLWGWLWSERFWLPENVSWADLEGPADGYGYPRGRH) are Lumenal-facing. An N-linked (GlcNAc...) asparagine glycan is attached at asparagine 26. Residues 47 to 67 (ILSVFPLAAGIFFVRLLFERF) form a helical membrane-spanning segment. Positions 75–136 (CIGIEDSGPY…RHRRNQDKPP (62 aa)) are homeobox-like. The region spanning 139–340 (TKFCESMWRF…IARIALKALI (202 aa)) is the TLC domain. A run of 4 helical transmembrane segments spans residues 148–168 (FTFY…SPWF), 183–203 (LSSG…SLMF), 214–234 (FLIM…SYIN), and 272–292 (LFVI…PFWI). A Last loop motif motif is present at residues 299–309 (ESWEIIGPYAS). A helical membrane pass occupies residues 311-331 (WLLNGLLLTLQLLHVIWSYLI). The Cytoplasmic portion of the chain corresponds to 332–392 (ARIALKALIR…HMGGSYWAEE (61 aa)). Residues 349–392 (RSDVESSSEEEDVTTCTKSPCDSSSSNGANRVNGHMGGSYWAEE) are disordered. The segment covering 362-378 (TTCTKSPCDSSSSNGAN) has biased composition (polar residues).

As to quaternary structure, interacts with PAQR4; the interaction regulates the stability and activity of CERS5 and is inhibited in presence of ceramides. In terms of processing, phosphorylated at the C-terminus by CK2.

It is found in the endoplasmic reticulum membrane. The catalysed reaction is a sphingoid base + hexadecanoyl-CoA = an N-hexadecanoyl-sphingoid base + CoA + H(+). It catalyses the reaction sphinganine + hexadecanoyl-CoA = N-hexadecanoylsphinganine + CoA + H(+). The enzyme catalyses hexadecasphinganine + hexadecanoyl-CoA = N-hexadecanoylhexadecasphinganine + CoA + H(+). It carries out the reaction sphing-4-enine + hexadecanoyl-CoA = N-hexadecanoylsphing-4-enine + CoA + H(+). The catalysed reaction is 2-hydroxyhexadecanoyl-CoA + sphinganine = N-(2-hydroxyhexadecanoyl)-sphinganine + CoA + H(+). It catalyses the reaction sphinganine + tetradecanoyl-CoA = N-(tetradecanoyl)-sphinganine + CoA + H(+). The enzyme catalyses sphinganine + octadecanoyl-CoA = N-(octadecanoyl)-sphinganine + CoA + H(+). It carries out the reaction sphinganine + (9Z)-octadecenoyl-CoA = N-(9Z-octadecenoyl)-sphinganine + CoA + H(+). The catalysed reaction is a fatty acyl-CoA + sphing-4-enine = an N-acylsphing-4-enine + CoA + H(+). Its pathway is lipid metabolism; sphingolipid metabolism. With respect to regulation, inhibited by fumonisin B1. Its function is as follows. Ceramide synthase that catalyzes the transfer of the acyl chain from acyl-CoA to a sphingoid base, with high selectivity toward palmitoyl-CoA (hexadecanoyl-CoA; C16:0-CoA). Can use other acyl donors, but with less efficiency. N-acylates sphinganine and sphingosine bases to form dihydroceramides and ceramides in de novo synthesis and salvage pathways, respectively. Plays a role in de novo ceramide synthesis and surfactant homeostasis in pulmonary epithelia. The sequence is that of Ceramide synthase 5 from Homo sapiens (Human).